Here is a 296-residue protein sequence, read N- to C-terminus: Thymidylate synthase (296 aa).

DUMP contacts are provided by residues Arg24 and 151–152 (RR). Cys171 functions as the Nucleophile in the catalytic mechanism. DUMP is bound by residues 197 to 200 (RSAD), Asn208, and 238 to 240 (HVY). Asp200 contacts (6R)-5,10-methylene-5,6,7,8-tetrahydrofolate.

It belongs to the thymidylate synthase family. Homodimer.

The enzyme catalyses dUMP + (6R)-5,10-methylene-5,6,7,8-tetrahydrofolate = 7,8-dihydrofolate + dTMP. The protein operates within pyrimidine metabolism; dTTP biosynthesis. In Agaricus bisporus (White button mushroom), this protein is Thymidylate synthase (tms1).